The following is a 122-amino-acid chain: Large ribosomal subunit protein bL12 (122 aa).

It belongs to the bacterial ribosomal protein bL12 family. Homodimer. Part of the ribosomal stalk of the 50S ribosomal subunit. Forms a multimeric L10(L12)X complex, where L10 forms an elongated spine to which 2 to 4 L12 dimers bind in a sequential fashion. Binds GTP-bound translation factors.

Forms part of the ribosomal stalk which helps the ribosome interact with GTP-bound translation factors. Is thus essential for accurate translation. The protein is Large ribosomal subunit protein bL12 of Streptococcus pneumoniae serotype 19F (strain G54).